A 29-amino-acid polypeptide reads, in one-letter code: Cycloviolacin-O15 (29 aa).

Residues 1-29 constitute a cross-link (cyclopeptide (Gly-Asn)); that stretch reads GLVPCGETCFTGKCYTPGCSCSYPICKKN. 3 cysteine pairs are disulfide-bonded: cysteine 5/cysteine 19, cysteine 9/cysteine 21, and cysteine 14/cysteine 26.

This is a cyclic peptide.

Its function is as follows. Probably participates in a plant defense mechanism. Has hemolytic activity. This is Cycloviolacin-O15 from Viola odorata (Sweet violet).